A 234-amino-acid chain; its full sequence is Leucyl/phenylalanyl-tRNA--protein transferase (234 aa).

Belongs to the L/F-transferase family.

It localises to the cytoplasm. The enzyme catalyses N-terminal L-lysyl-[protein] + L-leucyl-tRNA(Leu) = N-terminal L-leucyl-L-lysyl-[protein] + tRNA(Leu) + H(+). It carries out the reaction N-terminal L-arginyl-[protein] + L-leucyl-tRNA(Leu) = N-terminal L-leucyl-L-arginyl-[protein] + tRNA(Leu) + H(+). It catalyses the reaction L-phenylalanyl-tRNA(Phe) + an N-terminal L-alpha-aminoacyl-[protein] = an N-terminal L-phenylalanyl-L-alpha-aminoacyl-[protein] + tRNA(Phe). Functions in the N-end rule pathway of protein degradation where it conjugates Leu, Phe and, less efficiently, Met from aminoacyl-tRNAs to the N-termini of proteins containing an N-terminal arginine or lysine. The chain is Leucyl/phenylalanyl-tRNA--protein transferase from Shigella sonnei (strain Ss046).